Reading from the N-terminus, the 316-residue chain is Retinol dehydrogenase 11 (316 aa).

The helical; Signal-anchor for type II membrane protein transmembrane segment at 1-21 (MFGFLLLLSLPFILYLVTPKI) threads the bilayer. Residues 22–316 (RKMLSSGVCT…CDLLGLPVDW (295 aa)) are Cytoplasmic-facing. Residue 45 to 51 (GANTGIG) participates in NADP(+) binding. At Lys109 the chain carries N6-acetyllysine. Ser174 provides a ligand contact to substrate. Catalysis depends on Tyr199, which acts as the Proton acceptor.

It belongs to the short-chain dehydrogenases/reductases (SDR) family. Post-translationally, not glycosylated. As to expression, expressed at high level in liver and testis. Expressed at lower levels in smooth muscle, thymus, submaxillary gland and epididymis. In testis, expression is restricted to pachytene spermatocytes. Also expressed in four layers of the retina, including the outer segment of rods and cones.

It localises to the endoplasmic reticulum membrane. The enzyme catalyses all-trans-retinol + NADP(+) = all-trans-retinal + NADPH + H(+). It carries out the reaction 11-cis-retinol + NADP(+) = 11-cis-retinal + NADPH + H(+). The catalysed reaction is 9-cis-retinol + NADP(+) = 9-cis-retinal + NADPH + H(+). It catalyses the reaction 13-cis-retinol + NADP(+) = 13-cis-retinal + NADPH + H(+). The enzyme catalyses a medium-chain primary fatty alcohol + NADP(+) = a medium-chain fatty aldehyde + NADPH + H(+). It carries out the reaction (2E,6Z)-nona-2,6-dien-1-ol + NADP(+) = (2E,6Z)-nona-2,6-dienal + NADPH + H(+). The catalysed reaction is (E)-oct-2-en-1-ol + NADP(+) = (2E)-octenal + NADPH + H(+). It catalyses the reaction (E)-non-2-en-1-ol + NADP(+) = (E)-non-2-enal + NADPH + H(+). The enzyme catalyses heptan-1-ol + NADP(+) = heptanal + NADPH + H(+). It carries out the reaction hexan-1-ol + NADP(+) = hexanal + NADPH + H(+). The catalysed reaction is decan-1-ol + NADP(+) = decanal + NADPH + H(+). It catalyses the reaction nonan-1-ol + NADP(+) = nonanal + NADPH + H(+). The enzyme catalyses octan-1-ol + NADP(+) = octanal + NADPH + H(+). It carries out the reaction (Z)-non-6-en-1-ol + NADP(+) = (Z)-non-6-enal + NADPH + H(+). It participates in cofactor metabolism; retinol metabolism. Its function is as follows. Retinol dehydrogenase with a clear preference for NADP. Displays high activity towards 9-cis, 11-cis and all-trans-retinol, and to a lesser extent on 13-cis-retinol. Also exhibits reductive activity towards toxic lipid peroxidation products such as medium-chain aldehydes trans-2-nonenal, nonanal, and cis-6-nonenal. Has no dehydrogenase activity towards steroid. Seems to be required for homeostasis of retinol in liver and testis. The chain is Retinol dehydrogenase 11 (Rdh11) from Mus musculus (Mouse).